The primary structure comprises 388 residues: Succinate--CoA ligase [ADP-forming] subunit beta (388 aa).

The ATP-grasp domain maps to 9–244 (KALFAEYGLP…PSQDDAREAH (236 aa)). ATP contacts are provided by residues lysine 46, 53 to 55 (GRG), glutamate 99, threonine 102, and glutamate 107. Mg(2+)-binding residues include asparagine 199 and aspartate 213. Substrate-binding positions include asparagine 264 and 321–323 (GIV).

This sequence belongs to the succinate/malate CoA ligase beta subunit family. Heterotetramer of two alpha and two beta subunits. Requires Mg(2+) as cofactor.

It carries out the reaction succinate + ATP + CoA = succinyl-CoA + ADP + phosphate. It catalyses the reaction GTP + succinate + CoA = succinyl-CoA + GDP + phosphate. Its pathway is carbohydrate metabolism; tricarboxylic acid cycle; succinate from succinyl-CoA (ligase route): step 1/1. Succinyl-CoA synthetase functions in the citric acid cycle (TCA), coupling the hydrolysis of succinyl-CoA to the synthesis of either ATP or GTP and thus represents the only step of substrate-level phosphorylation in the TCA. The beta subunit provides nucleotide specificity of the enzyme and binds the substrate succinate, while the binding sites for coenzyme A and phosphate are found in the alpha subunit. The sequence is that of Succinate--CoA ligase [ADP-forming] subunit beta from Shewanella loihica (strain ATCC BAA-1088 / PV-4).